The chain runs to 208 residues: Uracil phosphoribosyltransferase (208 aa).

5-phospho-alpha-D-ribose 1-diphosphate contacts are provided by residues R78, R103, and 130–138 (DPMLATGGS). Uracil-binding positions include I193 and 198–200 (GDA). D199 contributes to the 5-phospho-alpha-D-ribose 1-diphosphate binding site.

It belongs to the UPRTase family. Mg(2+) is required as a cofactor.

It carries out the reaction UMP + diphosphate = 5-phospho-alpha-D-ribose 1-diphosphate + uracil. It functions in the pathway pyrimidine metabolism; UMP biosynthesis via salvage pathway; UMP from uracil: step 1/1. Allosterically activated by GTP. Catalyzes the conversion of uracil and 5-phospho-alpha-D-ribose 1-diphosphate (PRPP) to UMP and diphosphate. The sequence is that of Uracil phosphoribosyltransferase from Yersinia enterocolitica serotype O:8 / biotype 1B (strain NCTC 13174 / 8081).